A 417-amino-acid chain; its full sequence is Serpin H1 (417 aa).

The first 17 residues, Met1–Ala17, serve as a signal peptide directing secretion. At Lys93 the chain carries N6-succinyllysine. N-linked (GlcNAc...) asparagine glycosylation is found at Asn119 and Asn124. Ser140 carries the phosphoserine modification. The residue at position 206 (Lys206) is an N6-acetyllysine. Residue Lys295 is modified to N6-succinyllysine. N6-acetyllysine is present on Lys318. N-linked (GlcNAc...) asparagine glycosylation is present at Asn394. The short motif at Arg414 to Leu417 is the Prevents secretion from ER element.

This sequence belongs to the serpin family.

The protein localises to the endoplasmic reticulum lumen. Its function is as follows. Binds specifically to collagen. Could be involved as a chaperone in the biosynthetic pathway of collagen. This Mus musculus (Mouse) protein is Serpin H1 (Serpinh1).